The following is a 348-amino-acid chain: Malyl-CoA/beta-methylmalyl-CoA/citramalyl-CoA lyase (348 aa).

Residues 32 to 33, lysine 40, and arginine 92 contribute to the substrate site; that span reads HF. Residues glutamate 157 and aspartate 184 each coordinate Mg(2+). Substrate is bound by residues 183–184 and leucine 274; that span reads AD.

The protein belongs to the HpcH/HpaI aldolase family. As to quaternary structure, homohexamer. Dimer of trimers. It depends on Mg(2+) as a cofactor. Mn(2+) serves as cofactor.

The catalysed reaction is (S)-malyl-CoA = glyoxylate + acetyl-CoA. It catalyses the reaction (2R,3S)-beta-methylmalyl-CoA = propanoyl-CoA + glyoxylate. The enzyme catalyses (3S)-citramalyl-CoA = pyruvate + acetyl-CoA. With respect to regulation, inhibited by oxalate. Involved in the 3-hydroxypropionate cycle used for autotrophic carbon dioxide fixation, and in the glyoxylate assimilation cycle used to regenerate acetyl-CoA and produce pyruvate as universal precursor for biosynthesis. As a part of the 3-hydroxypropionate cycle, it catalyzes the cleavage of (S)-malyl-CoA to yield acetyl-CoA and glyoxylate. As part of the glyoxylate assimilation cycle, it catalyzes the condensation of glyoxylate with propionyl-CoA to yield (2R,3S)-beta-methylmalyl-CoA, and catalyzes the cleavage of (S)-citramalyl-CoA to yield acetyl-CoA and pyruvate. The sequence is that of Malyl-CoA/beta-methylmalyl-CoA/citramalyl-CoA lyase (mcl) from Chloroflexus aurantiacus.